We begin with the raw amino-acid sequence, 62 residues long: Small EDRK-rich factor 1 (62 aa).

2 stretches are compositionally biased toward basic and acidic residues: residues 1–30 and 50–62; these read MARGNQREIARQKNMKKTQEISKGKRKEDS and IANEKKSMQTTEK. Residues 1–62 form a disordered region; that stretch reads MARGNQREIA…EKKSMQTTEK (62 aa).

Belongs to the SERF family. In terms of assembly, interacts with SNCA; this interaction promotes the aggregation of SNCA. Expressed in brain (at protein level). Highly expressed in the testis.

The protein resides in the cytoplasm. It is found in the cytosol. It localises to the nucleus. Functionally, positive regulator of amyloid protein aggregation and proteotoxicity. Induces conformational changes in amyloid proteins, such as APP, HTT, and SNCA, driving them into compact formations preceding the formation of aggregates. This Mus musculus (Mouse) protein is Small EDRK-rich factor 1 (Serf1).